Here is a 112-residue protein sequence, read N- to C-terminus: 87 kDa annexin-binding protein (112 aa).

Binds annexin.

In Physarum polycephalum (Slime mold), this protein is 87 kDa annexin-binding protein.